The sequence spans 378 residues: Glutamate 5-kinase (378 aa).

Lysine 14 provides a ligand contact to ATP. 3 residues coordinate substrate: serine 54, aspartate 141, and asparagine 153. Position 173 to 174 (173 to 174) interacts with ATP; that stretch reads SD. The PUA domain maps to 279–356; that stretch reads AGRLTVDAGA…DEISAILGYD (78 aa).

Belongs to the glutamate 5-kinase family.

The protein localises to the cytoplasm. The enzyme catalyses L-glutamate + ATP = L-glutamyl 5-phosphate + ADP. Its pathway is amino-acid biosynthesis; L-proline biosynthesis; L-glutamate 5-semialdehyde from L-glutamate: step 1/2. In terms of biological role, catalyzes the transfer of a phosphate group to glutamate to form L-glutamate 5-phosphate. The protein is Glutamate 5-kinase of Brucella canis (strain ATCC 23365 / NCTC 10854 / RM-666).